The primary structure comprises 412 residues: NADH-quinone oxidoreductase subunit D (412 aa).

Belongs to the complex I 49 kDa subunit family. As to quaternary structure, NDH-1 is composed of 14 different subunits. Subunits NuoB, C, D, E, F, and G constitute the peripheral sector of the complex.

The protein resides in the cell inner membrane. The enzyme catalyses a quinone + NADH + 5 H(+)(in) = a quinol + NAD(+) + 4 H(+)(out). In terms of biological role, NDH-1 shuttles electrons from NADH, via FMN and iron-sulfur (Fe-S) centers, to quinones in the respiratory chain. The immediate electron acceptor for the enzyme in this species is believed to be a menaquinone. Couples the redox reaction to proton translocation (for every two electrons transferred, four hydrogen ions are translocated across the cytoplasmic membrane), and thus conserves the redox energy in a proton gradient. This is NADH-quinone oxidoreductase subunit D from Flavobacterium johnsoniae (strain ATCC 17061 / DSM 2064 / JCM 8514 / BCRC 14874 / CCUG 350202 / NBRC 14942 / NCIMB 11054 / UW101) (Cytophaga johnsonae).